A 404-amino-acid chain; its full sequence is Putative nitronate monooxygenase (404 aa).

FMN is bound at residue 41–43; the sequence is PMA. H224 (proton acceptor) is an active-site residue. H224 is a binding site for substrate. Residues 270 to 272 and 293 to 294 each bind FMN; these read AGG and GT.

The protein belongs to the nitronate monooxygenase family. NMO class I subfamily. It depends on FMN as a cofactor.

The protein localises to the cytoplasm. The enzyme catalyses ethylnitronate + O2 = chemical entity + acetaldehyde + nitrite + H(+). Catalyzes the oxidation of alkyl nitronates to produce the corresponding carbonyl compounds and nitrites. The protein is Putative nitronate monooxygenase of Saccharomyces cerevisiae (strain ATCC 204508 / S288c) (Baker's yeast).